We begin with the raw amino-acid sequence, 351 residues long: Probable dual-specificity RNA methyltransferase RlmN (351 aa).

The active-site Proton acceptor is the Glu-92. The 235-residue stretch at 98–332 folds into the Radical SAM core domain; that stretch reads TDQRLTVCIS…VSLRASRGLD (235 aa). The cysteines at positions 105 and 337 are disulfide-linked. Residues Cys-112, Cys-116, and Cys-119 each coordinate [4Fe-4S] cluster. S-adenosyl-L-methionine-binding positions include 159–160, Ser-189, 218–220, and Asn-294; these read GE and SLH. The S-methylcysteine intermediate role is filled by Cys-337.

Belongs to the radical SAM superfamily. RlmN family. Requires [4Fe-4S] cluster as cofactor.

It is found in the cytoplasm. The catalysed reaction is adenosine(2503) in 23S rRNA + 2 reduced [2Fe-2S]-[ferredoxin] + 2 S-adenosyl-L-methionine = 2-methyladenosine(2503) in 23S rRNA + 5'-deoxyadenosine + L-methionine + 2 oxidized [2Fe-2S]-[ferredoxin] + S-adenosyl-L-homocysteine. The enzyme catalyses adenosine(37) in tRNA + 2 reduced [2Fe-2S]-[ferredoxin] + 2 S-adenosyl-L-methionine = 2-methyladenosine(37) in tRNA + 5'-deoxyadenosine + L-methionine + 2 oxidized [2Fe-2S]-[ferredoxin] + S-adenosyl-L-homocysteine. Functionally, specifically methylates position 2 of adenine 2503 in 23S rRNA and position 2 of adenine 37 in tRNAs. This is Probable dual-specificity RNA methyltransferase RlmN from Synechococcus sp. (strain CC9902).